The primary structure comprises 243 residues: Proteasome subunit beta (243 aa).

The span at 1–16 (MRAPQHNSDFSRTVNQ) shows a compositional bias: polar residues. Residues 1–29 (MRAPQHNSDFSRTVNQLADDPNPYEPEVG) form a disordered region. Positions 1–48 (MRAPQHNSDFSRTVNQLADDPNPYEPEVGSMPKNEFSRADLDNVNKTG) are cleaved as a propeptide — removed in mature form; by autocatalysis. Threonine 49 functions as the Nucleophile in the catalytic mechanism.

Belongs to the peptidase T1B family. As to quaternary structure, the 20S proteasome core is composed of 14 alpha and 14 beta subunits that assemble into four stacked heptameric rings, resulting in a barrel-shaped structure. The two inner rings, each composed of seven catalytic beta subunits, are sandwiched by two outer rings, each composed of seven alpha subunits. The catalytic chamber with the active sites is on the inside of the barrel. Has a gated structure, the ends of the cylinder being occluded by the N-termini of the alpha-subunits. Is capped at one or both ends by the proteasome regulatory ATPase, PAN.

The protein resides in the cytoplasm. The catalysed reaction is Cleavage of peptide bonds with very broad specificity.. With respect to regulation, the formation of the proteasomal ATPase PAN-20S proteasome complex, via the docking of the C-termini of PAN into the intersubunit pockets in the alpha-rings, triggers opening of the gate for substrate entry. Interconversion between the open-gate and close-gate conformations leads to a dynamic regulation of the 20S proteasome proteolysis activity. In terms of biological role, component of the proteasome core, a large protease complex with broad specificity involved in protein degradation. This chain is Proteasome subunit beta, found in Natrialba magadii (strain ATCC 43099 / DSM 3394 / CCM 3739 / CIP 104546 / IAM 13178 / JCM 8861 / NBRC 102185 / NCIMB 2190 / MS3) (Natronobacterium magadii).